The primary structure comprises 821 residues: G-type lectin S-receptor-like serine/threonine-protein kinase SD2-5 (821 aa).

Residues 1-21 (MRGVFIVIVTCLVFLPDPLRA) form the signal peptide. Residues 22–429 (GVASIGSITP…NGEDDGKHFP (408 aa)) are Extracellular-facing. In terms of domain architecture, Bulb-type lectin spans 33–148 (FGGSQMNYIN…DGTSIWESFD (116 aa)). N-linked (GlcNAc...) asparagine glycosylation is found at Asn51, Asn121, Asn174, and Asn248. Positions 280-314 (PSDLCGTPEPCGPYYVCSGSKVCGCVSGLSRARSD) constitute an EGF-like; atypical domain. 2 cysteine pairs are disulfide-bonded: Cys284–Cys296 and Cys290–Cys302. A PAN domain is found at 323-411 (CKKTKDNATL…SGFVSYIKIA (89 aa)). Asn329, Asn370, and Asn380 each carry an N-linked (GlcNAc...) asparagine glycan. Cystine bridges form between Cys363–Cys385 and Cys367–Cys373. A helical transmembrane segment spans residues 430–450 (YVVIIVVVTVFIIAVLIFVAF). The Cytoplasmic portion of the chain corresponds to 451 to 821 (RIHKRKKMIL…LSAVRLSGPR (371 aa)). The Protein kinase domain occupies 493-768 (NNFSVKLGQG…KVVQMLEGVF (276 aa)). ATP-binding positions include 499-507 (LGQGGFGSV) and Lys521. The caM-binding stretch occupies residues 581 to 599 (KDGDVLLDWDTRFNIALGT). The active-site Proton acceptor is Asp618. A Phosphoserine modification is found at Ser635. The residue at position 652 (Thr652) is a Phosphothreonine.

The protein belongs to the protein kinase superfamily. Ser/Thr protein kinase family. As to quaternary structure, interacts with PUB9, PUB13, PUB14 and PUB29.

Its subcellular location is the membrane. The catalysed reaction is L-seryl-[protein] + ATP = O-phospho-L-seryl-[protein] + ADP + H(+). It carries out the reaction L-threonyl-[protein] + ATP = O-phospho-L-threonyl-[protein] + ADP + H(+). The sequence is that of G-type lectin S-receptor-like serine/threonine-protein kinase SD2-5 (SD25) from Arabidopsis thaliana (Mouse-ear cress).